The primary structure comprises 101 residues: Glutaredoxin-1 (101 aa).

The Glutaredoxin domain maps to 5–101 (KDRVEKLIQT…GSLSKMIAAL (97 aa)). A disulfide bridge links Cys-25 with Cys-28.

The protein belongs to the glutaredoxin family.

It localises to the cytoplasm. Its subcellular location is the cytosol. Its function is as follows. Multifunctional enzyme with glutathione-dependent oxidoreductase, glutathione peroxidase and glutathione S-transferase (GST) activity. The disulfide bond functions as an electron carrier in the glutathione-dependent synthesis of deoxyribonucleotides by the enzyme ribonucleotide reductase. In addition, it is also involved in reducing cytosolic protein- and non-protein-disulfides in a coupled system with glutathione reductase. May play a role in protection against oxidative stress caused by superoxide in vivo by regulating the redox state of the protein sulfhydryl groups. In Rhizophagus irregularis (strain DAOM 181602 / DAOM 197198 / MUCL 43194) (Arbuscular mycorrhizal fungus), this protein is Glutaredoxin-1.